A 74-amino-acid polypeptide reads, in one-letter code: Gene product 168 (74 aa).

Residues His-19–Val-73 adopt a coiled-coil conformation.

In terms of biological role, targets the host DNA sliding clamp and inhibits host DNA replication. In Twortvirus twort (Bacteriophage Twort), this protein is Gene product 168.